The sequence spans 348 residues: Interferon regulatory factor 2 (348 aa).

Positions 5-113 (RMRMRPWLEE…NAFRVYRMLP (109 aa)) form a DNA-binding region, IRF tryptophan pentad repeat. 2 positions are modified to N6-acetyllysine: Lys-75 and Lys-78. Positions 117 to 137 (RPSKKGKKTKSEKDDKFKQIK) are disordered. Over residues 125-137 (TKSEKDDKFKQIK) the composition is skewed to basic and acidic residues. Residues Lys-137, Lys-164, and Lys-291 each participate in a glycyl lysine isopeptide (Lys-Gly) (interchain with G-Cter in SUMO) cross-link. The disordered stretch occupies residues 311-348 (LPQVVSTASTSSSRPDRETRASVIKKTSDITQSRVKSC). Polar residues-rich tracts occupy residues 314-323 (VVSTASTSSS) and 339-348 (DITQSRVKSC).

It belongs to the IRF family. In terms of assembly, interacts with CREBBP in growing cells; the interaction acetylates IRF2 and regulates IRF2-dependent H4 promoter activity.

The protein resides in the nucleus. In terms of biological role, specifically binds to the upstream regulatory region of type I IFN and IFN-inducible MHC class I genes (the interferon consensus sequence (ICS)) and represses those genes. Also acts as an activator for several genes including H4 and IL7. Constitutively binds to the ISRE promoter to activate IL7. Involved in cell cycle regulation through binding the site II (HiNF-M) promoter region of H4 and activating transcription during cell growth. Antagonizes IRF1 transcriptional activation. The chain is Interferon regulatory factor 2 (IRF2) from Gallus gallus (Chicken).